The primary structure comprises 230 residues: Cytidylate kinase (230 aa).

An ATP-binding site is contributed by 16–24 (GPASAGKST).

It belongs to the cytidylate kinase family. Type 1 subfamily.

The protein resides in the cytoplasm. The enzyme catalyses CMP + ATP = CDP + ADP. The catalysed reaction is dCMP + ATP = dCDP + ADP. The polypeptide is Cytidylate kinase (Lactobacillus johnsonii (strain CNCM I-12250 / La1 / NCC 533)).